Reading from the N-terminus, the 1333-residue chain is NPC1-like intracellular cholesterol transporter 1 (1333 aa).

The N-terminal stretch at 1–20 (MAAAWQGWLLWALLLNSAQG) is a signal peptide. The Extracellular segment spans residues 21 to 284 (ELYTPTHKAG…SFYMGRMPGW (264 aa)). 9 cysteine pairs are disulfide-bonded: Cys32/Cys90, Cys38/Cys56, Cys77/Cys125, Cys91/Cys129, Cys113/Cys254, Cys116/Cys172, Cys189/Cys197, Cys243/Cys259, and Cys256/Cys263. A helical transmembrane segment spans residues 285–305 (LALIIIFTAVFVLLSVVLVYL). Residues 306 to 352 (RVASNRNKNKTAGSQEAPNLPRKRRFSPHTVLGRFFESWGTRVASWP) lie on the Cytoplasmic side of the membrane. The chain crosses the membrane as a helical span at residues 353–373 (LTVLALSFIVVIALSVGLTFI). At 374-632 (ELTTDPVELW…DEINRTTIQD (259 aa)) the chain is on the extracellular side. 2 cysteine pairs are disulfide-bonded: Cys471-Cys485 and Cys525-Cys542. The SSD domain occupies 632 to 797 (DLPVFAISYL…MTAFVALLSL (166 aa)). Residues 633–653 (LPVFAISYLIVFLYISLALGS) form a helical membrane-spanning segment. The Cytoplasmic segment spans residues 654-665 (YSRWSRVAVDSK). The helical transmembrane segment at 666-686 (ATLGLGGVAVVLGAVVAAMGF) threads the bilayer. Residues 687–696 (YSYLGVPSSL) are Extracellular-facing. A helical transmembrane segment spans residues 697–717 (VIIQVVPFLVLAVGADNIFIF). Over 718–742 (VLEYQRLPRMPGEQREAHIGRTLGS) the chain is Cytoplasmic. Residues 743 to 763 (VAPSMLLCSLSEAICFFLGAL) form a helical membrane-spanning segment. Residues 764–776 (TSMPAVRTFALTS) are Extracellular-facing. The helical transmembrane segment at 777–797 (GLAIIFDFLLQMTAFVALLSL) threads the bilayer. Residues 798–846 (DSKRQEASRPDVVCCFSSRNLPPPKQKEGLLLCFFRKIYTPFLLHRFIR) are Cytoplasmic-facing. Residues 847-867 (PVVLLLFLVLFGANLYLMCNI) traverse the membrane as a helical segment. Over 868–1113 (SVGLDQDLAL…QQYLTVLPEG (246 aa)) the chain is Extracellular. Disulfide bonds link Cys920-Cys925, Cys967-Cys1025, and Cys981-Cys990. A helical transmembrane segment spans residues 1114-1134 (IFTLALCFVPTFVVCYLLLGL). Residues 1135 to 1142 (DIRSGILN) are Cytoplasmic-facing. The chain crosses the membrane as a helical span at residues 1143–1163 (LLSIIMILVDTIGLMAVWGIS). The Extracellular segment spans residues 1164-1165 (YN). Residues 1166–1186 (AVSLINLVTAVGMSVEFVSHI) traverse the membrane as a helical segment. Topologically, residues 1187-1206 (TRSFAVSTKPTRLERAKDAT) are cytoplasmic. A helical transmembrane segment spans residues 1207–1227 (IFMGSAVFAGVAMTNFPGILI). Topologically, residues 1228–1242 (LGFAQAQLIQIFFFR) are extracellular. The chain crosses the membrane as a helical span at residues 1243-1263 (LNLLITLLGLLHGLVFLPVVL). Over 1264-1333 (SYLGPDVNQA…SSLPKSDQKF (70 aa)) the chain is Cytoplasmic.

Belongs to the patched family. As to quaternary structure, interacts with RAB11A, MYO5B and RAB11FIP2. Interaction with RAB11A, MYO5B and RAB11FIP2 is required for proper transport to the plasma membrane upon cholesterol depletion. Interacts with NPC2. Interacts with LIMA1. In terms of processing, highly glycosylated. In terms of tissue distribution, expressed in small intestine, stomach and muscle, along with detectable expression in lung, heart, gall bladder, brain, testis, skin and liver. Expression in liver is extremely low.

It localises to the apical cell membrane. It is found in the cell membrane. It catalyses the reaction cholesterol(in) = cholesterol(out). The enzyme catalyses sitosterol(out) = sitosterol(in). Functionally, plays a major role in cholesterol homeostasis. Critical for the uptake of cholesterol across the plasma membrane of the intestinal enterocyte. Involved in plant sterol absorption, it transports sitosterol, although at lower rates than cholesterol. May have a function in the transport of multiple lipids and their homeostasis, thereby influencing lipid metabolism regulation. May be involved in caveolin trafficking from the plasma membrane. Acts as a negative regulator of NPC2 and down-regulates its expression and secretion by inhibiting its maturation and accelerating its degradation. This Mus musculus (Mouse) protein is NPC1-like intracellular cholesterol transporter 1.